The chain runs to 267 residues: 4-hydroxy-tetrahydrodipicolinate reductase (267 aa).

NAD(+) contacts are provided by residues 8-13 (GAAGRM) and Asp-34. An NADP(+)-binding site is contributed by Arg-35. Residues 98–100 (GTT) and 122–125 (AANF) each bind NAD(+). The active-site Proton donor/acceptor is His-155. His-156 contributes to the (S)-2,3,4,5-tetrahydrodipicolinate binding site. Lys-159 acts as the Proton donor in catalysis. A (S)-2,3,4,5-tetrahydrodipicolinate-binding site is contributed by 165-166 (GT).

It belongs to the DapB family.

The protein localises to the cytoplasm. It catalyses the reaction (S)-2,3,4,5-tetrahydrodipicolinate + NAD(+) + H2O = (2S,4S)-4-hydroxy-2,3,4,5-tetrahydrodipicolinate + NADH + H(+). The enzyme catalyses (S)-2,3,4,5-tetrahydrodipicolinate + NADP(+) + H2O = (2S,4S)-4-hydroxy-2,3,4,5-tetrahydrodipicolinate + NADPH + H(+). Its pathway is amino-acid biosynthesis; L-lysine biosynthesis via DAP pathway; (S)-tetrahydrodipicolinate from L-aspartate: step 4/4. Catalyzes the conversion of 4-hydroxy-tetrahydrodipicolinate (HTPA) to tetrahydrodipicolinate. The polypeptide is 4-hydroxy-tetrahydrodipicolinate reductase (Pseudomonas amygdali pv. tabaci (Pseudomonas syringae pv. tabaci)).